The sequence spans 202 residues: Probable adenylyl-sulfate kinase (202 aa).

36-43 serves as a coordination point for ATP; the sequence is GLSGSGKS. Serine 110 acts as the Phosphoserine intermediate in catalysis.

This sequence belongs to the APS kinase family.

The enzyme catalyses adenosine 5'-phosphosulfate + ATP = 3'-phosphoadenylyl sulfate + ADP + H(+). The protein operates within sulfur metabolism; hydrogen sulfide biosynthesis; sulfite from sulfate: step 2/3. Catalyzes the synthesis of activated sulfate. This Halalkalibacterium halodurans (strain ATCC BAA-125 / DSM 18197 / FERM 7344 / JCM 9153 / C-125) (Bacillus halodurans) protein is Probable adenylyl-sulfate kinase.